A 104-amino-acid polypeptide reads, in one-letter code: L-rhamnose mutarotase (104 aa).

Substrate is bound at residue Y18. Catalysis depends on H22, which acts as the Proton donor. Substrate-binding positions include Y41 and 76–77 (WW).

Belongs to the rhamnose mutarotase family. Homodimer.

Its subcellular location is the cytoplasm. It carries out the reaction alpha-L-rhamnose = beta-L-rhamnose. It participates in carbohydrate metabolism; L-rhamnose metabolism. Functionally, involved in the anomeric conversion of L-rhamnose. This is L-rhamnose mutarotase from Sinorhizobium fredii (strain NBRC 101917 / NGR234).